The sequence spans 602 residues: Pentatricopeptide repeat-containing protein At3g04760, chloroplastic (602 aa).

Residues 1–78 (MTPLSSELVG…TDATLPTERR (78 aa)) constitute a chloroplast transit peptide. Over residues 42–64 (FSNSNPNNDNGRSFSSSGARNLQ) the composition is skewed to polar residues. Positions 42–85 (FSNSNPNNDNGRSFSSSGARNLQTTTTTDATLPTERRQQHSQSL) are disordered. Residues 65–74 (TTTTTDATLP) are compositionally biased toward low complexity. PPR repeat units lie at residues 88 to 122 (RDTQMLKIFHRSCRSGNYIESLHLLETMVRKGYNP), 123 to 153 (DVILCTKLIKGFFTLRNIPKAVRVMEILEKF), 157 to 191 (DVFAYNALINGFCKMNRIDDATRVLDRMRSKDFSP), 192 to 226 (DTVTYNIMIGSLCSRGKLDLALKVLNQLLSDNCQP), 227 to 261 (TVITYTILIEATMLEGGVDEALKLMDEMLSRGLKP), 262 to 296 (DMFTYNTIIRGMCKEGMVDRAFEMVRNLELKGCEP), 297 to 331 (DVISYNILLRALLNQGKWEEGEKLMTKMFSEKCDP), 332 to 366 (NVVTYSILITTLCRDGKIEEAMNLLKLMKEKGLTP), 367 to 401 (DAYSYDPLIAAFCREGRLDVAIEFLETMISDGCLP), 402 to 436 (DIVNYNTVLATLCKNGKADQALEIFGKLGEVGCSP), 437 to 471 (NSSSYNTMFSALWSSGDKIRALHMILEMMSNGIDP), 472 to 506 (DEITYNSMISCLCREGMVDEAFELLVDMRSCEFHP), 507 to 541 (SVVTYNIVLLGFCKAHRIEDAINVLESMVGNGCRP), and 542 to 576 (NETTYTVLIEGIGFAGYRAEAMELANDLVRIDAIS).

The protein belongs to the PPR family. P subfamily.

The protein localises to the plastid. The protein resides in the chloroplast. This Arabidopsis thaliana (Mouse-ear cress) protein is Pentatricopeptide repeat-containing protein At3g04760, chloroplastic.